Reading from the N-terminus, the 380-residue chain is Lipid-A-disaccharide synthase (380 aa).

It belongs to the LpxB family.

The catalysed reaction is a lipid X + a UDP-2-N,3-O-bis[(3R)-3-hydroxyacyl]-alpha-D-glucosamine = a lipid A disaccharide + UDP + H(+). The protein operates within bacterial outer membrane biogenesis; LPS lipid A biosynthesis. Functionally, condensation of UDP-2,3-diacylglucosamine and 2,3-diacylglucosamine-1-phosphate to form lipid A disaccharide, a precursor of lipid A, a phosphorylated glycolipid that anchors the lipopolysaccharide to the outer membrane of the cell. This Vibrio vulnificus (strain CMCP6) protein is Lipid-A-disaccharide synthase.